The sequence spans 340 residues: MNLDQKGLKKRSMTVAYFFENISKSLDIKLRRLNEVDEQKRRIFERDLHRPGLALAGFTNLFTYKRVQILGNTETRFLNHLEDDDRKRAFESLIKFKLPCIILTSNNKLEPELLDMATRAGVPVFVTRHSSTKTIYLLTDFLDDQFSQYQQFHGSMVDVYGVGVMLIGNSGLGKSEVALDLVERGHRLVADDAVVINRKGENVLIASGNEIVDHFMEIRGLGVVDVKAIFGIRAIRDKKVVQVVVELLEWNEESDYERLGLDTKTTKILGVDIPLIQLPINPGKNITVIIEVVALNYLLKHYSGYVAAEALEQRIKRVITNESLKKSGKGRTYLAKDYEE.

Catalysis depends on residues His153 and Lys174. An ATP-binding site is contributed by 168–175 (GNSGLGKS). Ser175 contributes to the Mg(2+) binding site. The Proton acceptor; for phosphorylation activity. Proton donor; for dephosphorylation activity role is filled by Asp192. An important for the catalytic mechanism of both phosphorylation and dephosphorylation region spans residues 216–225 (MEIRGLGVVD). Residue Glu217 coordinates Mg(2+). Residue Arg258 is part of the active site. The tract at residues 279-284 (PINPGK) is important for the catalytic mechanism of dephosphorylation.

Belongs to the HPrK/P family. In terms of assembly, homohexamer. Requires Mg(2+) as cofactor.

The enzyme catalyses [HPr protein]-L-serine + ATP = [HPr protein]-O-phospho-L-serine + ADP + H(+). It catalyses the reaction [HPr protein]-O-phospho-L-serine + phosphate + H(+) = [HPr protein]-L-serine + diphosphate. Catalyzes the ATP- as well as the pyrophosphate-dependent phosphorylation of a specific serine residue in HPr, a phosphocarrier protein of the phosphoenolpyruvate-dependent sugar phosphotransferase system (PTS). HprK/P also catalyzes the pyrophosphate-producing, inorganic phosphate-dependent dephosphorylation (phosphorolysis) of seryl-phosphorylated HPr (P-Ser-HPr). The polypeptide is HPr kinase/phosphorylase (Prosthecochloris aestuarii (strain DSM 271 / SK 413)).